The chain runs to 282 residues: Ribosomal RNA small subunit methyltransferase I (282 aa).

The protein belongs to the methyltransferase superfamily. RsmI family.

Its subcellular location is the cytoplasm. The catalysed reaction is cytidine(1402) in 16S rRNA + S-adenosyl-L-methionine = 2'-O-methylcytidine(1402) in 16S rRNA + S-adenosyl-L-homocysteine + H(+). Its function is as follows. Catalyzes the 2'-O-methylation of the ribose of cytidine 1402 (C1402) in 16S rRNA. This is Ribosomal RNA small subunit methyltransferase I from Buchnera aphidicola subsp. Acyrthosiphon pisum (strain APS) (Acyrthosiphon pisum symbiotic bacterium).